Reading from the N-terminus, the 152-residue chain is Xanthine-guanine phosphoribosyltransferase (152 aa).

5-phospho-alpha-D-ribose 1-diphosphate contacts are provided by residues 37–38 (RG), Arg-69, and 88–96 (DDLVDSGDT). Residue Arg-69 coordinates GMP. Asp-89 serves as a coordination point for Mg(2+). Asp-92 and Ile-135 together coordinate guanine. Xanthine is bound by residues Asp-92 and Ile-135. GMP-binding positions include 92-96 (DSGDT) and 134-135 (WI).

It belongs to the purine/pyrimidine phosphoribosyltransferase family. XGPT subfamily. In terms of assembly, homotetramer. Mg(2+) serves as cofactor.

It localises to the cell inner membrane. It carries out the reaction GMP + diphosphate = guanine + 5-phospho-alpha-D-ribose 1-diphosphate. It catalyses the reaction XMP + diphosphate = xanthine + 5-phospho-alpha-D-ribose 1-diphosphate. The catalysed reaction is IMP + diphosphate = hypoxanthine + 5-phospho-alpha-D-ribose 1-diphosphate. It functions in the pathway purine metabolism; GMP biosynthesis via salvage pathway; GMP from guanine: step 1/1. The protein operates within purine metabolism; XMP biosynthesis via salvage pathway; XMP from xanthine: step 1/1. Purine salvage pathway enzyme that catalyzes the transfer of the ribosyl-5-phosphate group from 5-phospho-alpha-D-ribose 1-diphosphate (PRPP) to the N9 position of the 6-oxopurines guanine and xanthine to form the corresponding ribonucleotides GMP (guanosine 5'-monophosphate) and XMP (xanthosine 5'-monophosphate), with the release of PPi. To a lesser extent, also acts on hypoxanthine. In Aliivibrio salmonicida (strain LFI1238) (Vibrio salmonicida (strain LFI1238)), this protein is Xanthine-guanine phosphoribosyltransferase.